The chain runs to 619 residues: Chaperone protein DnaK (619 aa).

The residue at position 175 (Thr175) is a Phosphothreonine; by autocatalysis. Positions 578–619 are disordered; the sequence is NGGAQGEGFDPNNMGGANAGTGAANSNDDNVVDADFEVQDDK. The segment covering 589–606 has biased composition (low complexity); sequence NNMGGANAGTGAANSNDD. Residues 607-619 show a composition bias toward acidic residues; that stretch reads NVVDADFEVQDDK.

This sequence belongs to the heat shock protein 70 family.

In terms of biological role, acts as a chaperone. The sequence is that of Chaperone protein DnaK from Clostridium perfringens (strain SM101 / Type A).